Consider the following 448-residue polypeptide: Phosphoglucosamine mutase (448 aa).

Serine 104 acts as the Phosphoserine intermediate in catalysis. The Mg(2+) site is built by serine 104, aspartate 241, aspartate 243, and aspartate 245. Residue serine 104 is modified to Phosphoserine.

This sequence belongs to the phosphohexose mutase family. Mg(2+) serves as cofactor. Post-translationally, activated by phosphorylation.

The enzyme catalyses alpha-D-glucosamine 1-phosphate = D-glucosamine 6-phosphate. Functionally, catalyzes the conversion of glucosamine-6-phosphate to glucosamine-1-phosphate. This is Phosphoglucosamine mutase from Nocardioides sp. (strain ATCC BAA-499 / JS614).